The sequence spans 334 residues: Fructose-1,6-bisphosphatase class 1 2 (334 aa).

Residues E92, D114, L116, and D117 each contribute to the Mg(2+) site. Residues 117 to 120 (DGSS), N208, and K274 contribute to the substrate site. Residue E280 coordinates Mg(2+).

Belongs to the FBPase class 1 family. Homotetramer. It depends on Mg(2+) as a cofactor.

The protein localises to the cytoplasm. It catalyses the reaction beta-D-fructose 1,6-bisphosphate + H2O = beta-D-fructose 6-phosphate + phosphate. The protein operates within carbohydrate biosynthesis; gluconeogenesis. The protein is Fructose-1,6-bisphosphatase class 1 2 of Albidiferax ferrireducens (strain ATCC BAA-621 / DSM 15236 / T118) (Rhodoferax ferrireducens).